The primary structure comprises 132 residues: Small ribosomal subunit protein uS8 (132 aa).

Belongs to the universal ribosomal protein uS8 family. In terms of assembly, part of the 30S ribosomal subunit. Contacts proteins S5 and S12.

One of the primary rRNA binding proteins, it binds directly to 16S rRNA central domain where it helps coordinate assembly of the platform of the 30S subunit. The protein is Small ribosomal subunit protein uS8 of Treponema pallidum (strain Nichols).